The primary structure comprises 169 residues: MAPKRAKRRTVEGGSSSVFSMFDQTQIQEFKEAFTVIDQNRDGIIDKEDLRDTFAAMGRLNVKNEELDAMMKEASGPINFTVFLTMFGEKLKGADPEDVITGAFKVLDPEGKGTIKKKFLEELLTTQCDRFSQEEIKNMWAAFPPDVGGNVDYKNICYVITHGDAKDQE.

At Ala-2 the chain carries N,N,N-trimethylalanine. Phosphoserine is present on residues Ser-15 and Ser-16. Phosphothreonine occurs at positions 25 and 35. The region spanning 25-60 (TQIQEFKEAFTVIDQNRDGIIDKEDLRDTFAAMGRL) is the EF-hand 1 domain. Ca(2+)-binding residues include Asp-38, Asn-40, Asp-42, and Asp-49. Ser-75 is subject to Phosphoserine. 2 EF-hand domains span residues 95-130 (DPED…QCDR) and 131-166 (FSQE…GDAK). Phosphothreonine is present on Thr-101.

Myosin is a hexamer of 2 heavy chains and 4 light chains. Expressed in fetal and adult skeletal muscle.

Myosin regulatory subunit that plays an essential role to maintain muscle integrity during early development. Plays a role in muscle contraction. In Homo sapiens (Human), this protein is Myosin regulatory light chain 11.